Consider the following 880-residue polypeptide: Endoglucanase E-4 (880 aa).

The signal sequence occupies residues 1-46 (MSVTEPPPRRRGRHSRARRFLTSLGATAALTAGMLGVPLATGTAHA). Asp104 acts as the Nucleophile in catalysis. Residues His422, His427, Asp461, and Glu470 contribute to the active site. The CBM3 domain occupies 504-652 (PDGPEIFVEA…GVPVWGTAPE (149 aa)). Positions 647-688 (WGTAPEEGEEPGGGEGPGGGEEPGEDVTPPSAPGSPAVRDVT) are disordered. A Fibronectin type-III domain is found at 678–770 (APGSPAVRDV…TVSFTTLAEN (93 aa)). Residues 771-880 (GGGPDASCTV…TLNGEPCALA (110 aa)) form the CBM2 domain.

Belongs to the glycosyl hydrolase 9 (cellulase E) family.

The catalysed reaction is Endohydrolysis of (1-&gt;4)-beta-D-glucosidic linkages in cellulose, lichenin and cereal beta-D-glucans.. It functions in the pathway glycan metabolism; cellulose degradation. The polypeptide is Endoglucanase E-4 (celD) (Thermobifida fusca (Thermomonospora fusca)).